Here is a 512-residue protein sequence, read N- to C-terminus: Putative aldehyde-dehydrogenase-like protein y4uC (512 aa).

Residues 14 to 41 are disordered; sequence MKPERGRRSPLPRRPTRPPDERSSGIGN. 266–271 contacts NADP(+); the sequence is GGFATG. Catalysis depends on residues Glu286 and Cys320.

It belongs to the aldehyde dehydrogenase family.

It functions in the pathway amino-acid degradation; 4-aminobutanoate degradation. Functionally, could be a succinate-semialdehyde dehydrogenase (NADP(+)). This chain is Putative aldehyde-dehydrogenase-like protein y4uC, found in Sinorhizobium fredii (strain NBRC 101917 / NGR234).